A 218-amino-acid chain; its full sequence is Redox-sensing transcriptional repressor Rex (218 aa).

Residues 25–64 (WYLSYVQLLHADGCESVSSTRIARAVGVDASLVAKDLSYV) constitute a DNA-binding region (H-T-H motif). 99 to 104 (GVGSLG) lines the NAD(+) pocket.

The protein belongs to the transcriptional regulatory Rex family. In terms of assembly, homodimer.

The protein localises to the cytoplasm. Modulates transcription in response to changes in cellular NADH/NAD(+) redox state. The protein is Redox-sensing transcriptional repressor Rex of Porphyromonas gingivalis (strain ATCC BAA-308 / W83).